A 206-amino-acid polypeptide reads, in one-letter code: Large ribosomal subunit protein uL4 (206 aa).

Positions 43-78 (NQRQGTHDTKTRAEVRGGGRKPWRQKGTGRARAGSS) are disordered. Positions 47-59 (GTHDTKTRAEVRG) are enriched in basic and acidic residues. The segment covering 60-71 (GGRKPWRQKGTG) has biased composition (basic residues).

Belongs to the universal ribosomal protein uL4 family. In terms of assembly, part of the 50S ribosomal subunit.

Its function is as follows. One of the primary rRNA binding proteins, this protein initially binds near the 5'-end of the 23S rRNA. It is important during the early stages of 50S assembly. It makes multiple contacts with different domains of the 23S rRNA in the assembled 50S subunit and ribosome. Forms part of the polypeptide exit tunnel. The protein is Large ribosomal subunit protein uL4 of Desulforamulus reducens (strain ATCC BAA-1160 / DSM 100696 / MI-1) (Desulfotomaculum reducens).